A 428-amino-acid polypeptide reads, in one-letter code: UPF0053 inner membrane protein YfjD (428 aa).

Topologically, residues 1–3 (MEH) are cytoplasmic. The CNNM transmembrane domain occupies 2–192 (EHISTTTLII…SQISRRNQDM (191 aa)). Residues 4–24 (ISTTTLIIILIIMVVISAYFS) traverse the membrane as a helical segment. Topologically, residues 25 to 64 (GSETGMMTLNRYRLRHMAKQGNRSAKRVEKLLRKPDRLIS) are periplasmic. The helical transmembrane segment at 65-85 (LVLIGNNLVNILASALGTIVG) threads the bilayer. The Cytoplasmic segment spans residues 86-91 (MRLYGD). The chain crosses the membrane as a helical span at residues 92–112 (AGVAIATGVLTFVVLVFAEVL). The Periplasmic portion of the chain corresponds to 113–129 (PKTIAALYPEKVAYPSS). A helical membrane pass occupies residues 130–150 (FLLAPLQILMMPLVWLLNAIT). The Cytoplasmic portion of the chain corresponds to 151 to 428 (RMLMRMMGIK…VKPLRESVAE (278 aa)). CBS domains follow at residues 208–270 (MVPR…FTKE) and 272–332 (MLRA…FTTS).

It belongs to the UPF0053 family.

It localises to the cell inner membrane. The chain is UPF0053 inner membrane protein YfjD (yfjD) from Escherichia coli (strain K12).